We begin with the raw amino-acid sequence, 508 residues long: ATP synthase subunit alpha (508 aa).

171–178 serves as a coordination point for ATP; the sequence is GDRQTGKT.

Belongs to the ATPase alpha/beta chains family. In terms of assembly, F-type ATPases have 2 components, CF(1) - the catalytic core - and CF(0) - the membrane proton channel. CF(1) has five subunits: alpha(3), beta(3), gamma(1), delta(1), epsilon(1). CF(0) has three main subunits: a(1), b(2) and c(9-12). The alpha and beta chains form an alternating ring which encloses part of the gamma chain. CF(1) is attached to CF(0) by a central stalk formed by the gamma and epsilon chains, while a peripheral stalk is formed by the delta and b chains.

It localises to the cell membrane. It catalyses the reaction ATP + H2O + 4 H(+)(in) = ADP + phosphate + 5 H(+)(out). Its function is as follows. Produces ATP from ADP in the presence of a proton gradient across the membrane. The alpha chain is a regulatory subunit. The polypeptide is ATP synthase subunit alpha (Protochlamydia amoebophila (strain UWE25)).